Reading from the N-terminus, the 160-residue chain is Calcium-binding protein CP1 (160 aa).

EF-hand domains are found at residues 22–49 (AFEI…IPSG), 52–87 (NDET…TPFS), and 93–128 (GDDG…AGLA). Residues Asp-27, Asp-29, Asp-31, Lys-33, Asp-38, Asp-65, Asn-67, Asp-69, Glu-76, Asp-106, Asp-108, Asp-110, Arg-112, and Asp-117 each coordinate Ca(2+).

Expressed in roots and flowers.

It is found in the cytoplasm. The protein resides in the cytosol. Functionally, binds calcium in vitro. This is Calcium-binding protein CP1 from Arabidopsis thaliana (Mouse-ear cress).